The sequence spans 308 residues: Ornithine carbamoyltransferase (308 aa).

Carbamoyl phosphate-binding positions include 56-59 (STRT), Q83, R107, and 134-137 (HPCQ). L-ornithine contacts are provided by residues N165, D225, and 229–230 (SM). Residues 266 to 267 (CL) and R294 contribute to the carbamoyl phosphate site.

Belongs to the aspartate/ornithine carbamoyltransferase superfamily. OTCase family.

Its subcellular location is the cytoplasm. It carries out the reaction carbamoyl phosphate + L-ornithine = L-citrulline + phosphate + H(+). It functions in the pathway amino-acid biosynthesis; L-arginine biosynthesis; L-arginine from L-ornithine and carbamoyl phosphate: step 1/3. Functionally, reversibly catalyzes the transfer of the carbamoyl group from carbamoyl phosphate (CP) to the N(epsilon) atom of ornithine (ORN) to produce L-citrulline. This Roseobacter denitrificans (strain ATCC 33942 / OCh 114) (Erythrobacter sp. (strain OCh 114)) protein is Ornithine carbamoyltransferase.